A 549-amino-acid chain; its full sequence is Membrane protein insertase YidC (549 aa).

The chain crosses the membrane as a helical span at residues 8-28; the sequence is VLLATVLSVAVLIVWQFVFPS. Over residues 29-39 the composition is skewed to pro residues; that stretch reads PKPKPQPPKPP. The disordered stretch occupies residues 29–68; the sequence is PKPKPQPPKPPEAAQRAEAPAAPAPGQPAAQAPAPAVPQD. 2 stretches are compositionally biased toward low complexity: residues 40–49 and 55–68; these read EAAQRAEAPA and QPAA…VPQD. The next 4 helical transmembrane spans lie at 328 to 348, 354 to 374, 424 to 444, and 502 to 522; these read IDYG…LFVM, LVAN…VLLY, LGGC…YATL, and PGFF…YIFV.

The protein belongs to the OXA1/ALB3/YidC family. Type 1 subfamily. In terms of assembly, interacts with the Sec translocase complex via SecD. Specifically interacts with transmembrane segments of nascent integral membrane proteins during membrane integration.

The protein resides in the cell inner membrane. Functionally, required for the insertion and/or proper folding and/or complex formation of integral membrane proteins into the membrane. Involved in integration of membrane proteins that insert both dependently and independently of the Sec translocase complex, as well as at least some lipoproteins. Aids folding of multispanning membrane proteins. The sequence is that of Membrane protein insertase YidC from Anaeromyxobacter sp. (strain Fw109-5).